A 540-amino-acid polypeptide reads, in one-letter code: Glucose-6-phosphate isomerase (540 aa).

Glu-350 (proton donor) is an active-site residue. Residues His-381 and Lys-503 contribute to the active site.

This sequence belongs to the GPI family.

Its subcellular location is the cytoplasm. It carries out the reaction alpha-D-glucose 6-phosphate = beta-D-fructose 6-phosphate. The protein operates within carbohydrate biosynthesis; gluconeogenesis. It functions in the pathway carbohydrate degradation; glycolysis; D-glyceraldehyde 3-phosphate and glycerone phosphate from D-glucose: step 2/4. Functionally, catalyzes the reversible isomerization of glucose-6-phosphate to fructose-6-phosphate. This is Glucose-6-phosphate isomerase from Burkholderia mallei (strain NCTC 10247).